A 109-amino-acid chain; its full sequence is UPF0449 protein C19orf25 homolog (109 aa).

At Y63 the chain carries Phosphotyrosine.

Belongs to the UPF0449 family.

The polypeptide is UPF0449 protein C19orf25 homolog (Rattus norvegicus (Rat)).